Consider the following 552-residue polypeptide: Dihydroxy-acid dehydratase (552 aa).

Position 78 (aspartate 78) interacts with Mg(2+). A [2Fe-2S] cluster-binding site is contributed by cysteine 119. Residues aspartate 120 and lysine 121 each contribute to the Mg(2+) site. Lysine 121 bears the N6-carboxylysine mark. Cysteine 191 contributes to the [2Fe-2S] cluster binding site. Glutamate 442 is a Mg(2+) binding site. The active-site Proton acceptor is the serine 468.

It belongs to the IlvD/Edd family. Homodimer. It depends on [2Fe-2S] cluster as a cofactor. Mg(2+) serves as cofactor.

It catalyses the reaction (2R)-2,3-dihydroxy-3-methylbutanoate = 3-methyl-2-oxobutanoate + H2O. The enzyme catalyses (2R,3R)-2,3-dihydroxy-3-methylpentanoate = (S)-3-methyl-2-oxopentanoate + H2O. It functions in the pathway amino-acid biosynthesis; L-isoleucine biosynthesis; L-isoleucine from 2-oxobutanoate: step 3/4. Its pathway is amino-acid biosynthesis; L-valine biosynthesis; L-valine from pyruvate: step 3/4. In terms of biological role, functions in the biosynthesis of branched-chain amino acids. Catalyzes the dehydration of (2R,3R)-2,3-dihydroxy-3-methylpentanoate (2,3-dihydroxy-3-methylvalerate) into 2-oxo-3-methylpentanoate (2-oxo-3-methylvalerate) and of (2R)-2,3-dihydroxy-3-methylbutanoate (2,3-dihydroxyisovalerate) into 2-oxo-3-methylbutanoate (2-oxoisovalerate), the penultimate precursor to L-isoleucine and L-valine, respectively. The sequence is that of Dihydroxy-acid dehydratase from Clostridium botulinum (strain Eklund 17B / Type B).